The sequence spans 1133 residues: Eukaryotic translation initiation factor 3 subunit A (1133 aa).

Residues isoleucine 317–serine 498 enclose the PCI domain. Coiled-coil stretches lie at residues lysine 573–arginine 700 and glutamate 784–serine 886. The span at lysine 810 to glycine 893 shows a compositional bias: basic and acidic residues. Residues lysine 810–arginine 1133 are disordered. A compositionally biased stretch (low complexity) spans alanine 895–alanine 909. 3 stretches are compositionally biased toward basic and acidic residues: residues glycine 920–arginine 944, valine 954–tryptophan 1081, and threonine 1097–arginine 1117.

Belongs to the eIF-3 subunit A family. Component of the eukaryotic translation initiation factor 3 (eIF-3) complex.

The protein resides in the cytoplasm. Functionally, RNA-binding component of the eukaryotic translation initiation factor 3 (eIF-3) complex, which is involved in protein synthesis of a specialized repertoire of mRNAs and, together with other initiation factors, stimulates binding of mRNA and methionyl-tRNAi to the 40S ribosome. The eIF-3 complex specifically targets and initiates translation of a subset of mRNAs involved in cell proliferation. This is Eukaryotic translation initiation factor 3 subunit A from Aedes aegypti (Yellowfever mosquito).